A 217-amino-acid chain; its full sequence is U exon protein (217 aa).

Disordered stretches follow at residues 79 to 113 (ISGEGNGQSGRGAARNHPRARTRCGATSPNHGGRV) and 171 to 217 (KEAP…WQRR). A compositionally biased stretch (basic residues) spans 188–197 (RGQRGRKRRC). Positions 202-217 (GGFQQPTGANQAWQRR) are enriched in polar residues.

It belongs to the adenoviridae U exon protein family.

The protein localises to the host nucleus. It is found in the host nucleoplasm. It localises to the host nucleolus. Its function is as follows. Might play a role in viral replication since it is associated with viral replication centers. Seems to have an effect on DBP localization. In Human adenovirus C serotype 5 (HAdV-5), this protein is U exon protein.